We begin with the raw amino-acid sequence, 146 residues long: Large ribosomal subunit protein uL11 (146 aa).

The protein belongs to the universal ribosomal protein uL11 family. In terms of assembly, part of the ribosomal stalk of the 50S ribosomal subunit. Interacts with L10 and the large rRNA to form the base of the stalk. L10 forms an elongated spine to which L12 dimers bind in a sequential fashion forming a multimeric L10(L12)X complex. Post-translationally, one or more lysine residues are methylated.

Its function is as follows. Forms part of the ribosomal stalk which helps the ribosome interact with GTP-bound translation factors. The chain is Large ribosomal subunit protein uL11 from Treponema pallidum subsp. pallidum (strain SS14).